Consider the following 71-residue polypeptide: MLNLVSLLLKKSIVIQLFDITVYKFKAKFWYKLPFETRLRIIKHTKPKALSATKQVKRDYRKTAILNSMRK.

This is Non-structural protein 3x from Canis lupus familiaris (Dog).